The primary structure comprises 293 residues: Cytochrome c biogenesis protein CcsA (293 aa).

Transmembrane regions (helical) follow at residues 12–32 (INIL…AKLT), 39–59 (VFSL…GMLL), 78–98 (LFLS…LSII), 99–119 (GAIG…ILPP), 142–162 (VMIF…IYVI), 216–236 (FISL…VWAN), 250–267 (TWAL…HIRI), and 273–293 (KIYA…VTWE).

The protein belongs to the CcmF/CycK/Ccl1/NrfE/CcsA family. In terms of assembly, may interact with Ccs1.

The protein localises to the plastid. Its subcellular location is the chloroplast thylakoid membrane. Functionally, required during biogenesis of c-type cytochromes (cytochrome c6 and cytochrome f) at the step of heme attachment. The protein is Cytochrome c biogenesis protein CcsA of Cyanidium caldarium (Red alga).